Here is a 40-residue protein sequence, read N- to C-terminus: Photosystem II reaction center protein J (40 aa).

Residues 8–28 form a helical membrane-spanning segment; that stretch reads IPLWLIGTVTGIPVIGLIGIF.

Belongs to the PsbJ family. In terms of assembly, PSII is composed of 1 copy each of membrane proteins PsbA, PsbB, PsbC, PsbD, PsbE, PsbF, PsbH, PsbI, PsbJ, PsbK, PsbL, PsbM, PsbT, PsbX, PsbY, PsbZ, Psb30/Ycf12, at least 3 peripheral proteins of the oxygen-evolving complex and a large number of cofactors. It forms dimeric complexes.

The protein localises to the plastid. The protein resides in the chloroplast thylakoid membrane. Functionally, one of the components of the core complex of photosystem II (PSII). PSII is a light-driven water:plastoquinone oxidoreductase that uses light energy to abstract electrons from H(2)O, generating O(2) and a proton gradient subsequently used for ATP formation. It consists of a core antenna complex that captures photons, and an electron transfer chain that converts photonic excitation into a charge separation. This is Photosystem II reaction center protein J from Vitis vinifera (Grape).